A 1488-amino-acid chain; its full sequence is Chromosome partition protein MukB (1488 aa).

34–41 is a binding site for ATP; sequence GGNGAGKS. Coiled coils occupy residues 326–418, 444–472, and 509–602; these read LEAD…QYNQ, LDTF…QTAH, and RHLA…QRAP. Positions 666-783 are flexible hinge; it reads PGGAEDQRLN…SLPIFGRAAR (118 aa). 3 coiled-coil regions span residues 835-923, 977-1116, and 1209-1265; these read EAEI…AKLE, EMLS…AKAG, and VEAI…LQSV. The disordered stretch occupies residues 1049 to 1074; sequence ADSGAEERARQRRDELHAQLSNNRSR. Residues 1051-1065 are compositionally biased toward basic and acidic residues; sequence SGAEERARQRRDELH.

The protein belongs to the SMC family. MukB subfamily. Homodimerization via its hinge domain. Binds to DNA via its C-terminal region. Interacts, and probably forms a ternary complex, with MukE and MukF via its C-terminal region. The complex formation is stimulated by calcium or magnesium. Interacts with tubulin-related protein FtsZ.

It localises to the cytoplasm. The protein resides in the nucleoid. Its function is as follows. Plays a central role in chromosome condensation, segregation and cell cycle progression. Functions as a homodimer, which is essential for chromosome partition. Involved in negative DNA supercoiling in vivo, and by this means organize and compact chromosomes. May achieve or facilitate chromosome segregation by condensation DNA from both sides of a centrally located replisome during cell division. This Salmonella arizonae (strain ATCC BAA-731 / CDC346-86 / RSK2980) protein is Chromosome partition protein MukB.